Here is a 515-residue protein sequence, read N- to C-terminus: MATIPSHNLRPHTTNQRTQYSLSFRPHFSRSTLITFPARSSPARAMSRTDEEASISTRLEQESYGLTTAEDIRRRDGEAKESKRLRDTWRKIQGEDDWAGLMDPMDPVLRSELIRYGEMAQACYDAFDFDPFSRYCGSCRFTRRHLFDSLGIIDSGYEVARYLYATSNINLPNFFSKSRWSKVWSKNANWMGYVAVSDDNEATRCRLGRRDIAIAWRGTVTRLEWIADLKDFLKPVSGNGFRCPDPAVKAESGFLDLYTDKDTSCNFSKFSAREQVLTEVKRLVERYGDEEGEELSITVTGHSLGGALAVLSAYDVAEMGVNRTRKGKVIPVTAFTYGGPRVGNIRFKERIEKLGVKVLRVVNEHDVVAKSPGLFLNERAPQALMKLAGGLPWCYSHVGEMLPLDHQKSPFLKPTVDLSTAHNLEALLHLLDGYHGKGQRFVLSSGRDPALVNKASDFLKDHFMVPPYWRQDANKGMVRNTDGRWIQPDRIRADDQHAPDIHQLLTQLHHPSQLL.

The N-terminal 44 residues, 1–44 (MATIPSHNLRPHTTNQRTQYSLSFRPHFSRSTLITFPARSSPAR), are a transit peptide targeting the chloroplast. Residues 301–305 (GHSLG) carry the GXSXG motif. The active-site Acyl-ester intermediate is serine 303. Residues aspartate 366 and histidine 422 each act as charge relay system in the active site.

It belongs to the AB hydrolase superfamily. Lipase family. As to expression, ubiquitous. Highly expressed in leaves.

The protein resides in the plastid. It is found in the chloroplast. The enzyme catalyses 1,2-dihexadecanoyl-sn-glycero-3-phosphocholine + H2O = 2-hexadecanoyl-sn-glycero-3-phosphocholine + hexadecanoate + H(+). It carries out the reaction a 1,2-diacyl-3-O-(beta-D-galactosyl)-sn-glycerol + H2O = an acyl-3-O-(beta-D-galactosyl)-sn-glycerol + a fatty acid + H(+). It catalyses the reaction a 1,2-diacyl-3-O-[alpha-D-galactosyl-(1-&gt;6)-beta-D-galactosyl]-sn-glycerol + H2O = acyl-3-O-[alpha-D-galactosyl-(1-&gt;6)-beta-D-galactosyl]-sn-glycerol + a fatty acid + H(+). Functionally, acylhydrolase with a broad specificity. Catalyzes the hydrolysis of phosphatidylcholine at the sn-1 position. Moderate activity toward phosphatidylcholine (PC), monogalactosyldiacylglycerol (MGDG), digalactosyldiacylglycerol (DGDG) and triacylglycerol (TAG). May display dual sn-1/sn-2 substrate specificity. Could be involved in early wound response. This Arabidopsis thaliana (Mouse-ear cress) protein is Phospholipase A1-Igamma1, chloroplastic.